A 195-amino-acid polypeptide reads, in one-letter code: uncharacterized protein (195 aa).

Positions 1-35 (MASSSSAALRPFGTARLTPGRQTGRQTQQQISAPE) are disordered. Residues 20–30 (GRQTGRQTQQQ) are compositionally biased toward low complexity. The MSP domain maps to 76–184 (GVTVIPRVAR…PASINMALEA (109 aa)).

This is an uncharacterized protein from Caenorhabditis elegans.